A 919-amino-acid polypeptide reads, in one-letter code: Calcium-activated chloride channel regulator 4 (919 aa).

The N-terminal stretch at 1-21 is a signal peptide; that stretch reads MGLFRGFVFLLVLCLLHQSNT. The metalloprotease domain stretch occupies residues 45–199; that stretch reads DEKIIEQIED…GISGRNRVYK (155 aa). Residue N75 is glycosylated (N-linked (GlcNAc...) asparagine). H155 serves as a coordination point for Zn(2+). Residue E156 is part of the active site. Residues H159 and D166 each coordinate Zn(2+). The region spanning 306–476 is the VWFA domain; it reads IVCLVLDKSG…NGLIDAFGAL (171 aa). N340, N504, N542, N588, N628, N811, N832, N837, and N852 each carry an N-linked (GlcNAc...) asparagine glycan. The segment at 870–893 is disordered; the sequence is ANPDDIDPTPTPTPTPTPDKSHNS. A helical transmembrane segment spans residues 895–915; sequence VNISTLVLSVIGSVVIVNFIL.

It belongs to the CLCR family. Post-translationally, the translation product is autoproteolytically cleaved by the metalloprotease domain in the endoplasmic reticulum into a N-terminal and a C-terminal products that remain physically associated with each other. The cleavage is necessary for calcium-activated chloride channel (CaCC) activation activity. Primarily expressed in the digestive tract, mainly in colon. Detected in smaller amounts in brain, urogenital organs, testis, and salivary and mammary glands. Highly expressed in the epithelial layer and submucosal gland of the inferior turbinate mucosa. Lower levels in the epithelial layer of nasal polyp.

It is found in the cell membrane. The protein resides in the apical cell membrane. It localises to the secreted. Functionally, may be involved in mediating calcium-activated chloride conductance. This Homo sapiens (Human) protein is Calcium-activated chloride channel regulator 4 (CLCA4).